The primary structure comprises 661 residues: uncharacterized protein (661 aa).

Transmembrane regions (helical) follow at residues 37 to 57 (VFLGLILALMVVVVALTLFLS), 87 to 107 (INSPAPWIGLVALAMAGAVFI), 120 to 140 (WLLLGVLLSLLFVVNGLNVIL), 158 to 178 (VFWQFLWIYGIVIVVAIPIIV), 243 to 263 (LLDILDSILTLISFTAILYTI), 266 to 286 (TLMWGLIGYAVFGTVVAIAIG), and 341 to 361 (FNLLIIWQALISLFQLGYNYF). In terms of domain architecture, ABC transmembrane type-1 spans 123–410 (LGVLLSLLFV…VTNQIQNITE (288 aa)). The ABC transporter domain maps to 453 to 659 (VALENVTLSP…AEGRWQISPI (207 aa)). 487 to 494 (GPSGSGKS) lines the ATP pocket.

Belongs to the ABC transporter superfamily.

It is found in the cell inner membrane. This is an uncharacterized protein from Synechocystis sp. (strain ATCC 27184 / PCC 6803 / Kazusa).